The sequence spans 884 residues: Alanine--tRNA ligase (884 aa).

Zn(2+)-binding residues include H562, H566, C676, and H680.

This sequence belongs to the class-II aminoacyl-tRNA synthetase family. The cofactor is Zn(2+).

It localises to the cytoplasm. The catalysed reaction is tRNA(Ala) + L-alanine + ATP = L-alanyl-tRNA(Ala) + AMP + diphosphate. Functionally, catalyzes the attachment of alanine to tRNA(Ala) in a two-step reaction: alanine is first activated by ATP to form Ala-AMP and then transferred to the acceptor end of tRNA(Ala). Also edits incorrectly charged Ser-tRNA(Ala) and Gly-tRNA(Ala) via its editing domain. The polypeptide is Alanine--tRNA ligase (Jannaschia sp. (strain CCS1)).